A 136-amino-acid chain; its full sequence is Alpha-2-purothionin (136 aa).

Positions Met1–Gly27 are cleaved as a signal peptide. 4 disulfides stabilise this stretch: Cys30/Cys66, Cys31/Cys58, Cys39/Cys56, and Cys43/Cys52. Positions Leu73–Ala136 are cleaved as a propeptide — acidic domain.

It belongs to the plant thionin (TC 1.C.44) family. 4 C-C subfamily.

The protein localises to the secreted. Its function is as follows. Thionins are small plant proteins which are toxic to animal cells. They seem to exert their toxic effect at the level of the cell membrane. Their precise function is not known. The polypeptide is Alpha-2-purothionin (THI1.2) (Triticum aestivum (Wheat)).